Here is a 262-residue protein sequence, read N- to C-terminus: Spindlin-Z (262 aa).

Positions 1-50 (MKTPFGKSPGQRSRADAGHAGVSASMMKKRTSHKKHRNNVGPSKPISQPR) are disordered. Basic residues predominate over residues 27 to 38 (MKKRTSHKKHRN).

Belongs to the SPIN/STSY family. As to expression, expressed in several tissues including testis.

The protein localises to the nucleus. Functionally, may play a role in mitosis. The sequence is that of Spindlin-Z (SPINZ) from Gallus gallus (Chicken).